We begin with the raw amino-acid sequence, 1563 residues long: Pentafunctional AROM polypeptide (1563 aa).

The tract at residues 1–382 (MAEPISNPTR…YEPKASVVED (382 aa)) is 3-dehydroquinate synthase. Residues 48-50 (DTN), 82-85 (EYSK), 113-115 (GGV), and D118 each bind NAD(+). R129 serves as a coordination point for 7-phospho-2-dehydro-3-deoxy-D-arabino-heptonate. 138 to 139 (TT) contacts NAD(+). 2 residues coordinate 7-phospho-2-dehydro-3-deoxy-D-arabino-heptonate: D145 and K151. NAD(+) is bound at residue K160. N161 provides a ligand contact to 7-phospho-2-dehydro-3-deoxy-D-arabino-heptonate. NAD(+) contacts are provided by residues 178–181 (FLNT) and N189. Residue E193 participates in Zn(2+) binding. 7-phospho-2-dehydro-3-deoxy-D-arabino-heptonate is bound by residues 193–196 (EVIK) and K248. The active-site Proton acceptor; for 3-dehydroquinate synthase activity is E258. 7-phospho-2-dehydro-3-deoxy-D-arabino-heptonate is bound by residues 262–266 (RNLLN) and H269. Position 269 (H269) interacts with Zn(2+). The active-site Proton acceptor; for 3-dehydroquinate synthase activity is the H273. Residues H285 and K354 each coordinate 7-phospho-2-dehydro-3-deoxy-D-arabino-heptonate. H285 lines the Zn(2+) pocket. The interval 395-834 (VFAGVPKDLN…WDTMSNYFKV (440 aa)) is EPSP synthase. The active-site For EPSP synthase activity is C816. A shikimate kinase region spans residues 857 to 1051 (PKSIFIIGMR…KKKPHSFFVS (195 aa)). ATP is bound at residue 864–871 (GMRGAGKS). The segment at 1052–1265 (LTVPNVSKAL…AAPGQLSAAE (214 aa)) is 3-dehydroquinase. Catalysis depends on H1168, which acts as the Proton acceptor; for 3-dehydroquinate dehydratase activity. The active-site Schiff-base intermediate with substrate; for 3-dehydroquinate dehydratase activity is K1196. Residues 1278-1563 (PRSFHLFGNP…TDAQAAVMGN (286 aa)) form a shikimate dehydrogenase region.

It in the N-terminal section; belongs to the sugar phosphate cyclases superfamily. Dehydroquinate synthase family. The protein in the 2nd section; belongs to the EPSP synthase family. In the 3rd section; belongs to the shikimate kinase family. This sequence in the 4th section; belongs to the type-I 3-dehydroquinase family. It in the C-terminal section; belongs to the shikimate dehydrogenase family. As to quaternary structure, homodimer. Zn(2+) is required as a cofactor.

It is found in the cytoplasm. It catalyses the reaction 7-phospho-2-dehydro-3-deoxy-D-arabino-heptonate = 3-dehydroquinate + phosphate. It carries out the reaction 3-dehydroquinate = 3-dehydroshikimate + H2O. The catalysed reaction is shikimate + NADP(+) = 3-dehydroshikimate + NADPH + H(+). The enzyme catalyses shikimate + ATP = 3-phosphoshikimate + ADP + H(+). It catalyses the reaction 3-phosphoshikimate + phosphoenolpyruvate = 5-O-(1-carboxyvinyl)-3-phosphoshikimate + phosphate. It functions in the pathway metabolic intermediate biosynthesis; chorismate biosynthesis; chorismate from D-erythrose 4-phosphate and phosphoenolpyruvate: step 2/7. It participates in metabolic intermediate biosynthesis; chorismate biosynthesis; chorismate from D-erythrose 4-phosphate and phosphoenolpyruvate: step 3/7. Its pathway is metabolic intermediate biosynthesis; chorismate biosynthesis; chorismate from D-erythrose 4-phosphate and phosphoenolpyruvate: step 4/7. The protein operates within metabolic intermediate biosynthesis; chorismate biosynthesis; chorismate from D-erythrose 4-phosphate and phosphoenolpyruvate: step 5/7. It functions in the pathway metabolic intermediate biosynthesis; chorismate biosynthesis; chorismate from D-erythrose 4-phosphate and phosphoenolpyruvate: step 6/7. The AROM polypeptide catalyzes 5 consecutive enzymatic reactions in prechorismate polyaromatic amino acid biosynthesis. This Neurospora crassa (strain ATCC 24698 / 74-OR23-1A / CBS 708.71 / DSM 1257 / FGSC 987) protein is Pentafunctional AROM polypeptide.